Consider the following 23-residue polypeptide: Phospholipase A2 homolog 4 (23 aa).

The protein belongs to the phospholipase A2 family. Group II subfamily. K49 sub-subfamily. Homodimer; non-covalently linked (probable alternative/compact dimer conformation in solution). In terms of tissue distribution, expressed by the venom gland.

Its subcellular location is the secreted. Snake venom phospholipase A2 homolog that lacks enzymatic activity. Induces acute muscle damage after intramuscular injection in mice and disrupts negatively charged liposomes but not positively charged ones. Also exerts a weak anticoagulant effect only at concentrations of 40 ug/ml or higher. A model of myotoxic mechanism has been proposed: an apo Lys49-PLA2 is activated by the entrance of a hydrophobic molecule (e.g. fatty acid) at the hydrophobic channel of the protein leading to a reorientation of a monomer. This reorientation causes a transition between 'inactive' to 'active' states, causing alignment of C-terminal and membrane-docking sites (MDoS) side-by-side and putting the membrane-disruption sites (MDiS) in the same plane, exposed to solvent and in a symmetric position for both monomers. The MDoS region stabilizes the toxin on membrane by the interaction of charged residues with phospholipid head groups. Subsequently, the MDiS region destabilizes the membrane with penetration of hydrophobic residues. This insertion causes a disorganization of the membrane, allowing an uncontrolled influx of ions (i.e. calcium and sodium), and eventually triggering irreversible intracellular alterations and cell death. The polypeptide is Phospholipase A2 homolog 4 (Bothrops asper (Terciopelo)).